We begin with the raw amino-acid sequence, 534 residues long: 2,3-bisphosphoglycerate-independent phosphoglycerate mutase (534 aa).

Residues aspartate 15 and serine 65 each contribute to the Mn(2+) site. The active-site Phosphoserine intermediate is serine 65. Substrate contacts are provided by residues histidine 126, 156 to 157 (RD), arginine 188, arginine 194, 261 to 264 (RPDR), and lysine 334. The Mn(2+) site is built by aspartate 401, histidine 405, aspartate 442, histidine 443, and histidine 460.

This sequence belongs to the BPG-independent phosphoglycerate mutase family. It depends on Mn(2+) as a cofactor.

The protein resides in the plastid. It is found in the chloroplast. It carries out the reaction (2R)-2-phosphoglycerate = (2R)-3-phosphoglycerate. It functions in the pathway carbohydrate degradation; glycolysis; pyruvate from D-glyceraldehyde 3-phosphate: step 3/5. Its function is as follows. Catalyzes the interconversion of 2-phosphoglycerate and 3-phosphoglycerate. This Pyropia yezoensis (Susabi-nori) protein is 2,3-bisphosphoglycerate-independent phosphoglycerate mutase.